The sequence spans 286 residues: L-rhamnose-binding lectin CSL1 (286 aa).

2 SUEL-type lectin domains span residues 96–186 and 193–280; these read TTCE…YICL and TCEG…YTCL.

Functionally, L-rhamnose binding lectin. Has hemagglutinating activity towards rabbit erythrocytes, but not human type B erythrocytes. Hemagglutinating activity is inhibited by smooth-type lipopolysaccharide (LPS) from K.pneumoniae, E.coli K-235, S.flexneri 1A, A.salmonicida and S.minnesota and rough-type LPS from S.flexneri, but not by rough-type LPS from E.coli K12 and E.coli EH100. Agglutinates E.coli K12 and B.subtilis. In Oncorhynchus keta (Chum salmon), this protein is L-rhamnose-binding lectin CSL1.